A 139-amino-acid chain; its full sequence is Small ribosomal subunit protein uS11 (139 aa).

Residues 1 to 13 are compositionally biased toward low complexity; sequence MAKQAAKGSAAAT. The interval 1-30 is disordered; it reads MAKQAAKGSAAATKRQRGKRREKKNVPRGQ. Over residues 14-23 the composition is skewed to basic residues; that stretch reads KRQRGKRREK.

The protein belongs to the universal ribosomal protein uS11 family. Part of the 30S ribosomal subunit. Interacts with proteins S7 and S18. Binds to IF-3.

In terms of biological role, located on the platform of the 30S subunit, it bridges several disparate RNA helices of the 16S rRNA. Forms part of the Shine-Dalgarno cleft in the 70S ribosome. This Roseiflexus sp. (strain RS-1) protein is Small ribosomal subunit protein uS11.